We begin with the raw amino-acid sequence, 101 residues long: Transcription and mRNA export factor SUS1 (101 aa).

The protein belongs to the ENY2 family. In terms of assembly, component of the nuclear pore complex (NPC)-associated TREX-2 complex (transcription and export complex 2), composed of at least SUS1, SAC3, THP1, SEM1, and CDC31. TREX-2 contains 2 SUS1 chains. The TREX-2 complex interacts with the nucleoporin NUP1. Component of the 1.8 MDa SAGA transcription coactivator-HAT complex. SAGA is built of 5 distinct domains with specialized functions. Within the SAGA complex, SUS1, SGF11, SGF73 and UBP8 form an additional subcomplex of SAGA called the DUB module (deubiquitination module). Interacts directly with THP1, SAC3, SGF11, and with the RNA polymerase II.

Its subcellular location is the nucleus. The protein resides in the nucleoplasm. It localises to the cytoplasm. The protein localises to the P-body. Its function is as follows. Involved in mRNA export coupled transcription activation by association with both the TREX-2 and the SAGA complexes. At the promoters, SAGA is required for recruitment of the basal transcription machinery. It influences RNA polymerase II transcriptional activity through different activities such as TBP interaction and promoter selectivity, interaction with transcription activators, and chromatin modification through histone acetylation and deubiquitination. Within the SAGA complex, participates in a subcomplex required for deubiquitination of H2B and for the maintenance of steady-state H3 methylation levels. The TREX-2 complex functions in docking export-competent ribonucleoprotein particles (mRNPs) to the nuclear entrance of the nuclear pore complex (nuclear basket). TREX-2 participates in mRNA export and accurate chromatin positioning in the nucleus by tethering genes to the nuclear periphery. May also be involved in cytoplasmic mRNA decay by interaction with components of P-bodies. This is Transcription and mRNA export factor SUS1 from Debaryomyces hansenii (strain ATCC 36239 / CBS 767 / BCRC 21394 / JCM 1990 / NBRC 0083 / IGC 2968) (Yeast).